A 161-amino-acid polypeptide reads, in one-letter code: Large ribosomal subunit protein uL15 (161 aa).

The interval 1–50 (MKLSDIADNAGSRKKRMRIGRGIGSGKGKTGGRGGKGQTARSGVRINGFE) is disordered. Gly residues predominate over residues 21 to 37 (RGIGSGKGKTGGRGGKG).

This sequence belongs to the universal ribosomal protein uL15 family. In terms of assembly, part of the 50S ribosomal subunit.

Functionally, binds to the 23S rRNA. This chain is Large ribosomal subunit protein uL15, found in Nitrobacter winogradskyi (strain ATCC 25391 / DSM 10237 / CIP 104748 / NCIMB 11846 / Nb-255).